Consider the following 333-residue polypeptide: Ribosomal RNA small subunit methyltransferase C (333 aa).

It belongs to the methyltransferase superfamily. RsmC family. In terms of assembly, monomer.

It localises to the cytoplasm. The enzyme catalyses guanosine(1207) in 16S rRNA + S-adenosyl-L-methionine = N(2)-methylguanosine(1207) in 16S rRNA + S-adenosyl-L-homocysteine + H(+). Its function is as follows. Specifically methylates the guanine in position 1207 of 16S rRNA in the 30S particle. The polypeptide is Ribosomal RNA small subunit methyltransferase C (Actinobacillus succinogenes (strain ATCC 55618 / DSM 22257 / CCUG 43843 / 130Z)).